The following is a 411-amino-acid chain: Alpha-N-acetylgalactosaminidase (411 aa).

The signal sequence occupies residues 1 to 17; sequence MLLKTVLLLGHVAQVLM. Intrachain disulfides connect C38-C80 and C42-C49. 78–79 serves as a coordination point for substrate; sequence DD. An N-linked (GlcNAc...) asparagine glycan is attached at N124. Residues C127 and C158 are joined by a disulfide bond. Residue K154 coordinates substrate. D156 serves as the catalytic Nucleophile. An N-linked (GlcNAc...) asparagine glycan is attached at N177. C187 and C209 are joined by a disulfide. S188 is a binding site for substrate. Residue N201 is glycosylated (N-linked (GlcNAc...) asparagine). Residues R213 and D217 each coordinate substrate. D217 acts as the Proton donor in catalysis. Residues S322 and S332 each carry the phosphoserine modification. Residues N359 and N385 are each glycosylated (N-linked (GlcNAc...) asparagine).

Belongs to the glycosyl hydrolase 27 family. In terms of assembly, homodimer.

It localises to the lysosome. It catalyses the reaction Cleavage of non-reducing alpha-(1-&gt;3)-N-acetylgalactosamine residues from human blood group A and AB mucin glycoproteins, Forssman hapten and blood group A lacto series glycolipids.. It carries out the reaction a neolactoside IV(3)-alpha-GalNAc,IV(2)-alpha-Fuc-nLc4Cer(d18:1(4E)) + H2O = a neolactoside IV(2)-alpha-Fuc-nLc4Cer(d18:1(4E)) + N-acetyl-alpha-D-galactosamine. The catalysed reaction is a neolactoside IV(3)-alpha-GalNAc,IV(2)-alpha-Fuc-nLc4Cer(d18:0) + H2O = a neolactoside IV(2)-alpha-Fuc-nLc4Cer(d18:0) + N-acetyl-alpha-D-galactosamine. The enzyme catalyses a globoside IV3GalNAc-Gb4Cer + H2O = N-acetyl-alpha-D-galactosamine + a globoside Gb4Cer. Removes terminal alpha-N-acetylgalactosamine residues from glycolipids and glycopeptides. Required for the breakdown of glycolipids. In Homo sapiens (Human), this protein is Alpha-N-acetylgalactosaminidase.